Consider the following 388-residue polypeptide: Dual specificity mitogen-activated protein kinase kinase 1 (388 aa).

A disordered region spans residues 1 to 20 (PIQLNPAPDGSAVNGTSSAE). One can recognise a Protein kinase domain in the interval 61–356 (FEKISELGAG…LKQLMIHAFI (296 aa)). ATP contacts are provided by residues 67-75 (LGAGNGGVV) and K90. D183 (proton acceptor) is an active-site residue. S211 and S215 each carry phosphoserine; by RAF. Positions 275–299 (DSPVTETSPRQRAPGRPMSSYGSDS) are disordered.

This sequence belongs to the protein kinase superfamily. STE Ser/Thr protein kinase family. MAP kinase kinase subfamily. Post-translationally, MAPKK is itself dependent on Ser/Thr phosphorylation for activity catalyzed by MAP kinase kinase kinases (RAF or MEKK1).

Its subcellular location is the cytoplasm. The protein localises to the cytoskeleton. It localises to the microtubule organizing center. The protein resides in the centrosome. It is found in the spindle pole body. Its subcellular location is the nucleus. The catalysed reaction is L-seryl-[protein] + ATP = O-phospho-L-seryl-[protein] + ADP + H(+). It carries out the reaction L-threonyl-[protein] + ATP = O-phospho-L-threonyl-[protein] + ADP + H(+). It catalyses the reaction L-tyrosyl-[protein] + ATP = O-phospho-L-tyrosyl-[protein] + ADP + H(+). Functionally, dual specificity protein kinase which acts as an essential component of the MAP kinase signal transduction pathway. Binding of extracellular ligands such as growth factors, cytokines and hormones to their cell-surface receptors activates RAS and this initiates RAF1 activation. RAF1 then further activates the dual-specificity protein kinases MAP2K1/MEK1 and MAP2K2/MEK2. Both MAP2K1/MEK1 and MAP2K2/MEK2 function specifically in the MAPK/ERK cascade, and catalyze the concomitant phosphorylation of a threonine and a tyrosine residue in a Thr-Glu-Tyr sequence located in the extracellular signal-regulated kinases MAPK3/ERK1 and MAPK1/ERK2, leading to their activation and further transduction of the signal within the MAPK/ERK cascade. Depending on the cellular context, this pathway mediates diverse biological functions such as cell growth, adhesion, survival and differentiation predominantly through the regulation of transcription, metabolism and cytoskeletal rearrangements. The sequence is that of Dual specificity mitogen-activated protein kinase kinase 1 (MAP2K1) from Serinus canaria (Island canary).